The sequence spans 618 residues: DNA mismatch repair protein MutL (618 aa).

A compositionally biased stretch (polar residues) spans 348–359 (QTDTARSPTGNF). The tract at residues 348–400 (QTDTARSPTGNFESGEVFDYPKSQLQPSHSVSSGGASLGSRSAGGSGGAYRAT) is disordered. A compositionally biased stretch (low complexity) spans 377–388 (SVSSGGASLGSR).

This sequence belongs to the DNA mismatch repair MutL/HexB family.

In terms of biological role, this protein is involved in the repair of mismatches in DNA. It is required for dam-dependent methyl-directed DNA mismatch repair. May act as a 'molecular matchmaker', a protein that promotes the formation of a stable complex between two or more DNA-binding proteins in an ATP-dependent manner without itself being part of a final effector complex. The sequence is that of DNA mismatch repair protein MutL from Pseudoalteromonas translucida (strain TAC 125).